A 423-amino-acid polypeptide reads, in one-letter code: Endoplasmic reticulum junction formation protein lunapark (423 aa).

Residues 1-45 (MGALLAKWRAKPSTVEVLEKMEKDIQSLEEFRDKNQKLRKIWVAR) lie on the Cytoplasmic side of the membrane. Residues 16-40 (EVLEKMEKDIQSLEEFRDKNQKLRK) are a coiled coil. The chain crosses the membrane as a helical span at residues 46–66 (LFFYSTILYILTSLTVYLWYL). Over 67–77 (PDGMTARLLTM) the chain is Lumenal. Residues 78–98 (LLFLSFPVLIWFVRTLLILWF) traverse the membrane as a helical segment. The Cytoplasmic segment spans residues 99–423 (SRRTERNNDA…ETEESFMETE (325 aa)). Positions 101–128 (RTERNNDALELLKTEKKKILEEVMEKET) form a coiled coil. Residues 147–169 (KELELPVPGPPITPRPGQDLRQR) are disordered. Phosphothreonine is present on Thr159. Residues Ser177, Ser179, and Ser188 each carry the phosphoserine modification. At Thr198 the chain carries Phosphothreonine. The interval 200 to 247 (SLQRDTSAPGGPPERSVQPTPQSNILQRRPGSPATTVSGMAIHPPGPP) is disordered. Residues Ser206 and Ser215 each carry the phosphoserine modification. Polar residues predominate over residues 216–225 (VQPTPQSNIL). Residue Thr219 is modified to Phosphothreonine. Phosphoserine is present on residues Ser222 and Ser231. Residues 280-305 (CQQCFSHNGMALKEEFEYVAFRCAYC) form a C4-type; plays a role in ER morphology zinc finger. The tract at residues 318-423 (APRLQEINFD…ETEESFMETE (106 aa)) is disordered. The segment covering 334–343 (DSQGSVSSVQ) has biased composition (polar residues). Acidic residues-rich tracts occupy residues 370–391 (QAIEEDSTCSEQQWEEAPDDSE) and 414–423 (ETEESFMETE).

It belongs to the lunapark family. In terms of assembly, homodimer; homodimerization requires the C4-type zinc finger motif and decreases during mitosis in a phosphorylation-dependent manner. Post-translationally, phosphorylated. Phosphorylation at Thr-159 occurs during interphase. Phosphorylation at Ser-177, Ser-179, Ser-188, Thr-198, Ser-206, Ser-215, Thr-219, Ser-222 and Ser-231 occurs during mitosis; these phosphorylations reduce both its homodimerization and the ER three-way tubular junction formation.

Its subcellular location is the endoplasmic reticulum membrane. Its function is as follows. Endoplasmic reticulum (ER)-shaping membrane protein that plays a role in determining ER morphology. Involved in the stabilization of nascent three-way ER tubular junctions within the ER network. May also play a role as a curvature-stabilizing protein within three-way ER tubular junction network. The sequence is that of Endoplasmic reticulum junction formation protein lunapark (lnpk) from Xenopus tropicalis (Western clawed frog).